We begin with the raw amino-acid sequence, 948 residues long: Probable DNA-directed RNA polymerase (948 aa).

Active-site residues include aspartate 600, lysine 680, and aspartate 853.

This sequence belongs to the phage and mitochondrial RNA polymerase family.

Its subcellular location is the mitochondrion. The enzyme catalyses RNA(n) + a ribonucleoside 5'-triphosphate = RNA(n+1) + diphosphate. Its function is as follows. DNA-dependent RNA polymerase catalyzes the transcription of DNA into RNA using the four ribonucleoside triphosphates as substrates. The sequence is that of Probable DNA-directed RNA polymerase from Podospora anserina (Pleurage anserina).